Consider the following 101-residue polypeptide: Urease subunit gamma (101 aa).

Belongs to the urease gamma subunit family. As to quaternary structure, heterotrimer of UreA (gamma), UreB (beta) and UreC (alpha) subunits. Three heterotrimers associate to form the active enzyme.

Its subcellular location is the cytoplasm. It carries out the reaction urea + 2 H2O + H(+) = hydrogencarbonate + 2 NH4(+). Its pathway is nitrogen metabolism; urea degradation; CO(2) and NH(3) from urea (urease route): step 1/1. This Ureaplasma urealyticum serovar 10 (strain ATCC 33699 / Western) protein is Urease subunit gamma.